Reading from the N-terminus, the 92-residue chain is Small ribosomal subunit protein uS19 (92 aa).

Belongs to the universal ribosomal protein uS19 family.

Functionally, protein S19 forms a complex with S13 that binds strongly to the 16S ribosomal RNA. The sequence is that of Small ribosomal subunit protein uS19 from Azorhizobium caulinodans (strain ATCC 43989 / DSM 5975 / JCM 20966 / LMG 6465 / NBRC 14845 / NCIMB 13405 / ORS 571).